The sequence spans 428 residues: Immunoglobulin superfamily containing leucine-rich repeat protein (428 aa).

The first 18 residues, 1 to 18 (MQELHLLWWALLLGLAQA), serve as a signal peptide directing secretion. Positions 19 to 50 (CPEPCDCGEKYGFQIADCAYRDLEAVPPGFPA) constitute an LRRNT domain. N-linked (GlcNAc...) asparagine glycosylation is present at asparagine 51. LRR repeat units lie at residues 51 to 72 (NVTA…AFRE), 75 to 96 (LLQS…ALAS), 99 to 122 (HLKS…HNLS), 123 to 144 (ALQL…AFRS), and 147 to 168 (ALRS…TFTP). The region spanning 180–231 (NPFDCTCGIVWLKTWALATAVSIPEQDNIACTSPHVLKGTPLSRLPPLPCSA) is the LRRCT domain. The 112-residue stretch at 232–343 (PSVQLSYQPS…GSAESSVDVA (112 aa)) folds into the Ig-like domain. A disulfide bridge connects residues cysteine 257 and cysteine 327. Residue asparagine 309 is glycosylated (N-linked (GlcNAc...) asparagine).

The protein resides in the secreted. This chain is Immunoglobulin superfamily containing leucine-rich repeat protein (ISLR), found in Pongo abelii (Sumatran orangutan).